A 124-amino-acid polypeptide reads, in one-letter code: UPF0102 protein tll1737 (124 aa).

It belongs to the UPF0102 family.

In Thermosynechococcus vestitus (strain NIES-2133 / IAM M-273 / BP-1), this protein is UPF0102 protein tll1737.